Reading from the N-terminus, the 157-residue chain is Protein Smg (157 aa).

It belongs to the Smg family.

In Escherichia coli O6:H1 (strain CFT073 / ATCC 700928 / UPEC), this protein is Protein Smg.